A 268-amino-acid polypeptide reads, in one-letter code: Small ribosomal subunit protein eS1 (268 aa).

Positions 1–21 (MAVGKNKGLSKGGKKGGKKKV) are disordered.

The protein belongs to the eukaryotic ribosomal protein eS1 family. Component of the small ribosomal subunit. Mature ribosomes consist of a small (40S) and a large (60S) subunit. The 40S subunit contains about 33 different proteins and 1 molecule of RNA (18S). The 60S subunit contains about 49 different proteins and 3 molecules of RNA (28S, 5.8S and 5S).

It localises to the cytoplasm. In terms of biological role, essential for oogenesis; required for late follicle cell development. In Drosophila persimilis (Fruit fly), this protein is Small ribosomal subunit protein eS1.